A 231-amino-acid chain; its full sequence is NADH-ubiquinone oxidoreductase chain 4 (231 aa).

7 helical membrane-spanning segments follow: residues 1-21 (PIAG…YGII), 34-54 (VFLP…LTCL), 63-85 (IAYS…TPWG), 89-111 (AMAL…NTTY), 128-148 (MMPM…AIPP), 169-189 (TIIM…HMFL), and 211-231 (LLMT…ELVT).

Belongs to the complex I subunit 4 family.

It is found in the mitochondrion membrane. It carries out the reaction a ubiquinone + NADH + 5 H(+)(in) = a ubiquinol + NAD(+) + 4 H(+)(out). Its function is as follows. Core subunit of the mitochondrial membrane respiratory chain NADH dehydrogenase (Complex I) that is believed to belong to the minimal assembly required for catalysis. Complex I functions in the transfer of electrons from NADH to the respiratory chain. The immediate electron acceptor for the enzyme is believed to be ubiquinone. This chain is NADH-ubiquinone oxidoreductase chain 4 (MT-ND4), found in Sistrurus miliarius (Pigmy rattlesnake).